The sequence spans 436 residues: Trigger factor (436 aa).

The PPIase FKBP-type domain occupies 161-248; it reads TDRVTIDLYG…LKKVEQYRLP (88 aa).

This sequence belongs to the FKBP-type PPIase family. Tig subfamily.

It localises to the cytoplasm. It carries out the reaction [protein]-peptidylproline (omega=180) = [protein]-peptidylproline (omega=0). Involved in protein export. Acts as a chaperone by maintaining the newly synthesized protein in an open conformation. Functions as a peptidyl-prolyl cis-trans isomerase. The protein is Trigger factor of Baumannia cicadellinicola subsp. Homalodisca coagulata.